We begin with the raw amino-acid sequence, 898 residues long: Alanine--tRNA ligase (898 aa).

Positions 564, 568, 682, and 686 each coordinate Zn(2+).

The protein belongs to the class-II aminoacyl-tRNA synthetase family. It depends on Zn(2+) as a cofactor.

It localises to the cytoplasm. It catalyses the reaction tRNA(Ala) + L-alanine + ATP = L-alanyl-tRNA(Ala) + AMP + diphosphate. Catalyzes the attachment of alanine to tRNA(Ala) in a two-step reaction: alanine is first activated by ATP to form Ala-AMP and then transferred to the acceptor end of tRNA(Ala). Also edits incorrectly charged Ser-tRNA(Ala) and Gly-tRNA(Ala) via its editing domain. The sequence is that of Alanine--tRNA ligase from Beijerinckia indica subsp. indica (strain ATCC 9039 / DSM 1715 / NCIMB 8712).